A 185-amino-acid chain; its full sequence is Prenylated Rab acceptor protein 1 (185 aa).

The Cytoplasmic segment spans residues 1 to 78; sequence MAAQKDQQKD…RNVEYYQSNY (78 aa). The required for interaction with prenylated RAB3A and VAMP2 stretch occupies residues 30–54; the sequence is AGREWLERRRATIRPWSTFVDQQRF. 2 helical membrane-spanning segments follow: residues 79–94 and 95–112; these read VFVF…VTSP and MLLV…ILYL. Over 113–131 the chain is Cytoplasmic; that stretch reads RTLESKLVLFGREVSPAHQ. 2 consecutive transmembrane segments (helical) span residues 132–148 and 149–165; these read YALA…LAGA and GSAV…VIGS. The interval 165–185 is required for interaction with GDI1; that stretch reads SHAAFHQIEAVDGEELQMEPV. Over 166–185 the chain is Cytoplasmic; sequence HAAFHQIEAVDGEELQMEPV. Residues 175 to 185 are required for interaction with prenylated RAB3A and VAMP2; it reads VDGEELQMEPV. Residues 175–185 are homodimerization; it reads VDGEELQMEPV.

This sequence belongs to the PRA1 family. Homodimer. Interacts with VAMP2 (synaptobrevin-2), GDI1, and PCLO. Interacts specifically with prenylated Rab proteins; strongly with RAB4B, RAB5A and RAB5C, and weakly with RAB4A, RAB6, RAB7A, RAB17 and RAB22. Interacts with NDRG1. Ubiquitous. Strongest expression found in placenta, pituitary gland, kidney, lung and stomach.

Its subcellular location is the cell membrane. The protein localises to the cytoplasm. The protein resides in the golgi apparatus. It is found in the cytoplasmic vesicle. It localises to the secretory vesicle. Its subcellular location is the synaptic vesicle. Its function is as follows. General Rab protein regulator required for vesicle formation from the Golgi complex. May control vesicle docking and fusion by mediating the action of Rab GTPases to the SNARE complexes. In addition it inhibits the removal of Rab GTPases from the membrane by GDI. This is Prenylated Rab acceptor protein 1 (RABAC1) from Homo sapiens (Human).